A 349-amino-acid polypeptide reads, in one-letter code: Dihydroorotate dehydrogenase (quinone) (349 aa).

FMN-binding positions include 67-71 (AGLDK) and Thr-91. Lys-71 provides a ligand contact to substrate. 116-120 (NRLGF) lines the substrate pocket. FMN-binding residues include Asn-147 and Asn-180. Position 180 (Asn-180) interacts with substrate. Residue Ser-183 is the Nucleophile of the active site. Asn-185 lines the substrate pocket. FMN contacts are provided by Lys-225 and Thr-253. 254-255 (NT) lines the substrate pocket. FMN-binding positions include Gly-276, Gly-305, and 326–327 (YT).

Belongs to the dihydroorotate dehydrogenase family. Type 2 subfamily. Monomer. Requires FMN as cofactor.

The protein localises to the cell membrane. The enzyme catalyses (S)-dihydroorotate + a quinone = orotate + a quinol. It functions in the pathway pyrimidine metabolism; UMP biosynthesis via de novo pathway; orotate from (S)-dihydroorotate (quinone route): step 1/1. Its function is as follows. Catalyzes the conversion of dihydroorotate to orotate with quinone as electron acceptor. The chain is Dihydroorotate dehydrogenase (quinone) from Bordetella parapertussis (strain 12822 / ATCC BAA-587 / NCTC 13253).